The primary structure comprises 152 residues: Sec-independent protein translocase protein TatB (152 aa).

Residues methionine 1–glycine 21 traverse the membrane as a helical segment. Residues glutamate 60–alanine 71 are compositionally biased toward basic and acidic residues. The disordered stretch occupies residues glutamate 60 to serine 152. Composition is skewed to low complexity over residues threonine 84 to aspartate 98 and alanine 124 to alanine 140. The segment covering lysine 141–serine 152 has biased composition (basic and acidic residues).

Belongs to the TatB family. As to quaternary structure, the Tat system comprises two distinct complexes: a TatABC complex, containing multiple copies of TatA, TatB and TatC subunits, and a separate TatA complex, containing only TatA subunits. Substrates initially bind to the TatABC complex, which probably triggers association of the separate TatA complex to form the active translocon.

It localises to the cell inner membrane. Its function is as follows. Part of the twin-arginine translocation (Tat) system that transports large folded proteins containing a characteristic twin-arginine motif in their signal peptide across membranes. Together with TatC, TatB is part of a receptor directly interacting with Tat signal peptides. TatB may form an oligomeric binding site that transiently accommodates folded Tat precursor proteins before their translocation. This Zymomonas mobilis subsp. mobilis (strain ATCC 31821 / ZM4 / CP4) protein is Sec-independent protein translocase protein TatB.